The chain runs to 487 residues: WRKY transcription factor 1 (487 aa).

The tract at residues 69-104 is disordered; sequence QSEVDVASPVSEKAPKVSESSGALSLQSGSEGNSPF. Ser-76 is modified (phosphoserine). Residues 86-101 are compositionally biased toward polar residues; the sequence is SESSGALSLQSGSEGN. A DNA-binding region (WRKY 1) is located at residues 105 to 169; the sequence is IREKVMEDGY…YFGEHDHPKP (65 aa). Residues Cys-136, Cys-141, His-164, and His-166 each coordinate Zn(2+). Residues 255–287 form a disordered region; the sequence is SSRITGDNTHKDYNSPTAKRRKKGGNIELSPVE. The short motif at 273 to 277 is the Nuclear localization signal element; sequence KRRKK. The segment at residues 301–366 is a DNA-binding region (WRKY 2); that stretch reads TLFDIVNDGY…YEGKHDHDMP (66 aa). Zn(2+) contacts are provided by Cys-332, Cys-337, His-361, and His-363. The disordered stretch occupies residues 380–487; it reads EVDDKEGDAN…QKPKTEPAQS (108 aa). Over residues 390 to 401 the composition is skewed to polar residues; it reads KTPQSSTLQSIT. Composition is skewed to basic and acidic residues over residues 429–462 and 476–487; these read LDEK…DDKT and EEQKPKTEPAQS.

It belongs to the WRKY group I family. In terms of tissue distribution, expressed to similar levels in root and flower, to a somewhat lower level in stem and to low levels in leaf and siliques.

It localises to the nucleus. Functionally, transcription factor. Binds to a 5'-CGTTGACCGAG-3' consensus core sequence which contains a W box, a frequently occurring elicitor-responsive cis-acting element. This chain is WRKY transcription factor 1, found in Arabidopsis thaliana (Mouse-ear cress).